Here is a 597-residue protein sequence, read N- to C-terminus: Elongation factor 4 (597 aa).

The tr-type G domain occupies Asp2–Lys184. Residues Asp14–Thr19 and Asn131–Asp134 each bind GTP.

It belongs to the TRAFAC class translation factor GTPase superfamily. Classic translation factor GTPase family. LepA subfamily.

It localises to the cell inner membrane. It carries out the reaction GTP + H2O = GDP + phosphate + H(+). Required for accurate and efficient protein synthesis under certain stress conditions. May act as a fidelity factor of the translation reaction, by catalyzing a one-codon backward translocation of tRNAs on improperly translocated ribosomes. Back-translocation proceeds from a post-translocation (POST) complex to a pre-translocation (PRE) complex, thus giving elongation factor G a second chance to translocate the tRNAs correctly. Binds to ribosomes in a GTP-dependent manner. The sequence is that of Elongation factor 4 from Burkholderia pseudomallei (strain 1710b).